We begin with the raw amino-acid sequence, 145 residues long: Basic phospholipase A2 KPA2 (145 aa).

Residues 1–19 form the signal peptide; sequence MYPAHLLVLVAVCVSLLGA. A propeptide spanning residues 20 to 27 is cleaved from the precursor; sequence ANIPPQPL. Disulfide bonds link C38/C97, C52/C144, C54/C70, C69/C125, C76/C118, C86/C111, and C104/C116. Residues Y53, G55, and G57 each coordinate Ca(2+). The active site involves H73. Residue D74 coordinates Ca(2+). The active site involves D119.

It belongs to the phospholipase A2 family. Group I subfamily. D49 sub-subfamily. In terms of assembly, monomer. Requires Ca(2+) as cofactor. Expressed by the venom gland.

It is found in the secreted. It carries out the reaction a 1,2-diacyl-sn-glycero-3-phosphocholine + H2O = a 1-acyl-sn-glycero-3-phosphocholine + a fatty acid + H(+). Functionally, snake venom phospholipase A2 (PLA2) that shows anticoagulant and neurotoxic activities. PLA2 catalyzes the calcium-dependent hydrolysis of the 2-acyl groups in 3-sn-phosphoglycerides. This is Basic phospholipase A2 KPA2 from Bungarus caeruleus (Indian krait).